A 281-amino-acid polypeptide reads, in one-letter code: MKNIGININTDKDISRNILDKIFQYIHEECSEAKIKVFYDSKGLDNEESRALDAVMVLGGDGTILGTARALAKYDVPIFGINRGHLGFLAEIELEDCKEAIKNLFKGQYKIEDRIMLKCDLKGIDKKDDFLALNDIVLTKGNLSRIVKYSIYVDDVWYTTFVADGVIVATPTGSTAYSLSAGGPIVYPDLDVLEIAPICPHSLGIRPILLNGNSKINIRVLKKYEDPVLTIDGQRYKKVTVNEVTISKSKYKCRLIKFKDKDYFKILRTKISYRSRECEGE.

Asp-61 acts as the Proton acceptor in catalysis. NAD(+)-binding positions include 61–62 (DG), 134–135 (ND), Arg-145, Asp-164, 175–180 (TAYSLS), and Gln-234.

It belongs to the NAD kinase family. A divalent metal cation is required as a cofactor.

The protein localises to the cytoplasm. It catalyses the reaction NAD(+) + ATP = ADP + NADP(+) + H(+). In terms of biological role, involved in the regulation of the intracellular balance of NAD and NADP, and is a key enzyme in the biosynthesis of NADP. Catalyzes specifically the phosphorylation on 2'-hydroxyl of the adenosine moiety of NAD to yield NADP. This chain is NAD kinase, found in Clostridium botulinum (strain Kyoto / Type A2).